Here is a 229-residue protein sequence, read N- to C-terminus: Ribonuclease 3 (229 aa).

Residues 4–133 (WEELQESVGF…FIGALYLDNG (130 aa)) enclose the RNase III domain. Mg(2+) is bound at residue glutamate 46. Residue aspartate 50 is part of the active site. The Mg(2+) site is built by aspartate 119 and glutamate 122. Glutamate 122 is an active-site residue. One can recognise a DRBM domain in the interval 159–228 (DYKTQLQEIV…AQFAINQLTH (70 aa)).

The protein belongs to the ribonuclease III family. As to quaternary structure, homodimer. It depends on Mg(2+) as a cofactor.

It localises to the cytoplasm. It catalyses the reaction Endonucleolytic cleavage to 5'-phosphomonoester.. Its function is as follows. Digests double-stranded RNA. Involved in the processing of primary rRNA transcript to yield the immediate precursors to the large and small rRNAs (23S and 16S). Processes some mRNAs, and tRNAs when they are encoded in the rRNA operon. Processes pre-crRNA and tracrRNA of type II CRISPR loci if present in the organism. The chain is Ribonuclease 3 from Listeria monocytogenes serotype 4b (strain CLIP80459).